The sequence spans 780 residues: MVEEDLNQIGGNSNYNGEGGDPESNTLNQPLVKANRTLSSTPLALVGAKVSHIESLDYEINENDLFKHDWRKRSKAQVLQYVFLKWTLACLVGLFTGLIATLINLAVENIAGYKLLAVGHFLTQERYVTGLMVLVGANLGLTLVASVLCVCFAPTAAGPGIPEIKAYLNGVDTPNMFGATTMIVKIVGSIGAVAAGLDLGKEGPLVHIGSCIASLLGQGGTDNHRIKWRWLRYFNNDRDRRDLITCGSAAGVCAAFRSPVGGVLFALEEVATWWRSALLWRTFFSTAVVVVVLREFIEICNSGKCGLFGKGGLIMFDVSHVTYTYHVTDIIPVMLIGVIGGILGSLYNHLLHKVLRLYNLINEKGKIHKVLLSLTVSLFTSVCLYGLPFLAKCKPCDPSIDEICPTNGRSGNFKQFHCPKGYYNDLATLLLTTNDDAVRNLFSSNTPNEFGMGSLWIFFVLYCILGLFTFGIATPSGLFLPIILMGAAYGRMLGAAMGSYTSIDQGLYAVLGAAALMAGSMRMTVSLCVIFLELTNNLLLLPITMIVLLIAKTVGDSFNPSIYDIILHLKGLPFLEANPEPWMRNLTVGELGDAKPPVVTLQGVEKVSNIVDVLKNTTHNAFPVLDEAEVPQVGLATGATELHGLILRAHLVKVLKKRWFLTEKRRTEEWEVREKFPWDELAEREDNFDDVAITSAEMEMYVDLHPLTNTTPYTVMENMSVAKALVLFRQVGLRHLLIVPKIQASGMCPVVGILTRQDLRAYNILQAFPLLEKSKGGKTH.

A disordered region spans residues 1–28; the sequence is MVEEDLNQIGGNSNYNGEGGDPESNTLN. Transmembrane regions (helical) follow at residues 87-107, 130-150, 177-197, 205-225, 247-267, 277-297, 327-347, 370-390, 452-472, 477-497, 509-529, and 530-550; these read TLAC…NLAV, GLMV…VLCV, FGAT…AAGL, LVHI…DNHR, GSAA…LFAL, ALLW…REFI, VTDI…GSLY, VLLS…LPFL, MGSL…TFGI, GLFL…GAAM, AVLG…SLCV, and IFLE…VLLI. 2 consecutive CBS domains span residues 594 to 663 and 708 to 770; these read AKPP…FLTE and TNTT…AFPL. A helical membrane pass occupies residues 735-755; sequence HLLIVPKIQASGMCPVVGILT.

Belongs to the chloride channel (TC 2.A.49) family. As to quaternary structure, homodimer. Interacts with PP2A5. Broadly expressed in the plant.

Its subcellular location is the membrane. Functionally, voltage-gated chloride channel. This is Chloride channel protein CLC-b (CLC-B) from Arabidopsis thaliana (Mouse-ear cress).